A 210-amino-acid polypeptide reads, in one-letter code: Large ribosomal subunit protein uL4 (210 aa).

The segment covering A41–K51 has biased composition (polar residues). Disordered stretches follow at residues A41–S60 and K67–K98.

This sequence belongs to the universal ribosomal protein uL4 family. In terms of assembly, part of the 50S ribosomal subunit.

One of the primary rRNA binding proteins, this protein initially binds near the 5'-end of the 23S rRNA. It is important during the early stages of 50S assembly. It makes multiple contacts with different domains of the 23S rRNA in the assembled 50S subunit and ribosome. In terms of biological role, forms part of the polypeptide exit tunnel. The protein is Large ribosomal subunit protein uL4 of Dehalococcoides mccartyi (strain ATCC BAA-2100 / JCM 16839 / KCTC 5957 / BAV1).